The sequence spans 904 residues: MAAAGGAEGRRAALEAAAAAAPERGGGSCVLCCGDLEATALGRCDHPVCYRCSTKMRVLCEQRYCAVCREELRQVVFGKKLPAFATIPIHQLQHEKKYDIYFADGKVYALYRQLLQHECPRCPELPPFSLFGDLEQHMRRQHELFCCRLCLQHLQIFTYERKWYSRKDLARHRMQGDPDDTSHRGHPLCKFCDERYLDNDELLKHLRRDHYFCHFCDSDGAQDYYSDYAYLREHFREKHFLCEEGRCSTEQFTHAFRTEIDLKAHRTACHSRSRAEARQNRHIDLQFSYAPRHSRRNEGVVGGEDYEEVDRYSRQGRVARAGTRGAQQSRRGSWRYKREEEDREVAAAVRASVAAQQQEEARRSEDQEEGGRPKKEEAAARGPEDPRGPRRSPRTQGEGPGPKETSTNGPVSQEAFSVTGPAAPGCVGVPGALPPPSPKLKDEDFPSLSASTSSSCSTAATPGPVGLALPYAIPARGRSAFQEEDFPALVSSVPKPGTAPTSLVSAWNSSSSSKKVAQPPLSAQATGSGQPTRKAGKGSRGGRKGGPPFTQEEEEDGGPALQELLSTRPTGSVSSTLGLASIQPSKVGKKKKVGSEKPGTTLPQPPPATCPPGALQAPEAPASRAEGPVAVVVNGHTEGPAPARSAPKEPPGLPRPLGSFPCPTPQEDFPALGGPCPPRMPPPPGFSAVVLLKGTPPPPPPGLVPPISKPPPGFSGLLPSPHPACVPSPATTTTTKAPRLLPAPRAYLVPENFRERNLQLIQSIRDFLQSDEARFSEFKSHSGEFRQGLISAAQYYKSCRDLLGENFQKVFNELLVLLPDTAKQQELLSAHTDFCNREKPLSTKSKKNKKSAWQATTQQAGLDCRVCPTCQQVLAHGDASSHQALHAARDDDFPSLQAIARIIT.

The RING-type zinc-finger motif lies at 29–69; the sequence is CVLCCGDLEATALGRCDHPVCYRCSTKMRVLCEQRYCAVCR. The C2H2-type zinc finger occupies 187 to 210; it reads PLCKFCDERYLDNDELLKHLRRDH. Residue tyrosine 306 is modified to Phosphotyrosine. Disordered regions lie at residues 312 to 469 and 490 to 656; these read YSRQ…GLAL and VSSV…LPRP. The span at 346 to 358 shows a compositional bias: low complexity; sequence AAAVRASVAAQQQ. A compositionally biased stretch (basic and acidic residues) spans 359–388; it reads EEARRSEDQEEGGRPKKEEAAARGPEDPRG. Polar residues predominate over residues 404-416; sequence ETSTNGPVSQEAF. Residues 418-431 show a composition bias toward low complexity; sequence VTGPAAPGCVGVPG. A phosphoserine mark is found at glycine 428, glycine 431, and serine 437. Composition is skewed to low complexity over residues 447-461 and 502-513; these read SLSA…TAAT and SLVSAWNSSSSS. Polar residues predominate over residues 521 to 531; that stretch reads LSAQATGSGQP. Over residues 534 to 543 the composition is skewed to basic residues; sequence KAGKGSRGGR. Residues 564–584 are compositionally biased toward polar residues; sequence LLSTRPTGSVSSTLGLASIQP.

This sequence belongs to the ZNF598/HEL2 family. As to quaternary structure, interacts with the E2 ubiquitin-conjugating enzyme UBE2D3. Component of the 4EHP-GYF2 complex, at least composed of EIF4E2, GIGYF2 and ZNF598.

The protein resides in the cytoplasm. The protein localises to the cytosol. It catalyses the reaction S-ubiquitinyl-[E2 ubiquitin-conjugating enzyme]-L-cysteine + [acceptor protein]-L-lysine = [E2 ubiquitin-conjugating enzyme]-L-cysteine + N(6)-ubiquitinyl-[acceptor protein]-L-lysine.. The protein operates within protein modification; protein ubiquitination. E3 ubiquitin-protein ligase that plays a key role in the ribosome quality control (RQC), a pathway that takes place when a ribosome has stalled during translation, leading to degradation of nascent peptide chains. ZNF598 is activated when ribosomes are stalled within an mRNA following translation of prematurely polyadenylated mRNAs. Acts as a ribosome collision sensor: specifically recognizes and binds collided di-ribosome, which arises when a trailing ribosome encounters a slower leading ribosome, leading to terminally arrest translation. Following binding to colliding ribosomes, mediates monoubiquitination of 40S ribosomal proteins RPS10/eS10 and RPS3/uS3, and 'Lys-63'-linked polyubiquitination of RPS20/uS10. Polyubiquitination of RPS20/uS10 promotes recruitment of the RQT (ribosome quality control trigger) complex, which drives the disassembly of stalled ribosomes, followed by degradation of nascent peptides. E3 ubiquitin-protein ligase activity is dependent on the E2 ubiquitin-conjugating enzyme UBE2D3. Also acts as an adapter that recruits the 4EHP-GYF2 complex to mRNAs. Independently of its role in RQC, may also act as a negative regulator of interferon-stimulated gene (ISG) expression. Its function is as follows. (Microbial infection) Required for poxvirus protein synthesis by mediating ubiquitination of RPS10/eS10 and RPS20/uS10. Poxvirus encoding mRNAs contain unusual 5' poly(A) leaders and ZNF598 is required for their translational efficiency, possibly via its ability to suppress readthrough or sliding on shorter poly(A) tracts. This chain is E3 ubiquitin-protein ligase ZNF598, found in Homo sapiens (Human).